The sequence spans 484 residues: ATP synthase subunit beta (484 aa).

169 to 176 (GGAGVGKT) is a binding site for ATP.

It belongs to the ATPase alpha/beta chains family. In terms of assembly, F-type ATPases have 2 components, CF(1) - the catalytic core - and CF(0) - the membrane proton channel. CF(1) has five subunits: alpha(3), beta(3), gamma(1), delta(1), epsilon(1). CF(0) has three main subunits: a(1), b(2) and c(9-12). The alpha and beta chains form an alternating ring which encloses part of the gamma chain. CF(1) is attached to CF(0) by a central stalk formed by the gamma and epsilon chains, while a peripheral stalk is formed by the delta and b chains.

It localises to the cell membrane. The catalysed reaction is ATP + H2O + 4 H(+)(in) = ADP + phosphate + 5 H(+)(out). Produces ATP from ADP in the presence of a proton gradient across the membrane. The catalytic sites are hosted primarily by the beta subunits. The protein is ATP synthase subunit beta of Nocardioides sp. (strain ATCC BAA-499 / JS614).